Reading from the N-terminus, the 972-residue chain is POM121-like protein 2 (972 aa).

Disordered stretches follow at residues Met1 to Pro67, Leu281 to Leu302, Thr328 to Met359, Gly406 to Asp431, Leu676 to Gly726, and Ser953 to Lys972. Positions Arg40 to Arg57 are enriched in basic residues. Polar residues-rich tracts occupy residues Ser287–Leu302 and Val339–Ala352. The segment covering Pro413–Asp431 has biased composition (low complexity). Residues Gly677 to Ala696 show a composition bias toward polar residues. Over residues Leu697–Lys706 the composition is skewed to low complexity.

It belongs to the POM121 family.

This Mus musculus (Mouse) protein is POM121-like protein 2 (Pom121l2).